The following is a 316-amino-acid chain: Pantothenate kinase (316 aa).

95 to 102 (GSVAVGKS) is a binding site for ATP.

It belongs to the prokaryotic pantothenate kinase family.

The protein resides in the cytoplasm. It carries out the reaction (R)-pantothenate + ATP = (R)-4'-phosphopantothenate + ADP + H(+). It functions in the pathway cofactor biosynthesis; coenzyme A biosynthesis; CoA from (R)-pantothenate: step 1/5. This is Pantothenate kinase from Shewanella sp. (strain MR-7).